The sequence spans 750 residues: von Willebrand factor A domain-containing protein DDB_G0292188 (750 aa).

The region spanning 17–249 (EIKTVFNSDS…IKDDLLLDVV (233 aa)) is the VWFA domain. Low complexity-rich tracts occupy residues 586-595 (SINDNNNSFN) and 603-645 (PFFE…SSAS). A disordered region spans residues 586–657 (SINDNNNSFN…PPPSQMLNEQ (72 aa)).

The protein is von Willebrand factor A domain-containing protein DDB_G0292188 of Dictyostelium discoideum (Social amoeba).